Consider the following 418-residue polypeptide: Bifunctional enzyme IspD/IspF (418 aa).

The interval 1 to 261 (MADTPALIPQ…EFKRASDMNF (261 aa)) is 2-C-methyl-D-erythritol 4-phosphate cytidylyltransferase. The tract at residues 262–418 (RIGEGWDIHA…RATVLLRKFI (157 aa)) is 2-C-methyl-D-erythritol 2,4-cyclodiphosphate synthase. A divalent metal cation is bound by residues Asp-268 and His-270. 4-CDP-2-C-methyl-D-erythritol 2-phosphate-binding positions include 268 to 270 (DIH) and 294 to 295 (HS). A divalent metal cation is bound at residue His-302. 4-CDP-2-C-methyl-D-erythritol 2-phosphate-binding positions include 316-318 (DIG) and 321-325 (FPDTD).

The protein in the N-terminal section; belongs to the IspD/TarI cytidylyltransferase family. IspD subfamily. It in the C-terminal section; belongs to the IspF family. A divalent metal cation is required as a cofactor.

It catalyses the reaction 2-C-methyl-D-erythritol 4-phosphate + CTP + H(+) = 4-CDP-2-C-methyl-D-erythritol + diphosphate. The catalysed reaction is 4-CDP-2-C-methyl-D-erythritol 2-phosphate = 2-C-methyl-D-erythritol 2,4-cyclic diphosphate + CMP. Its pathway is isoprenoid biosynthesis; isopentenyl diphosphate biosynthesis via DXP pathway; isopentenyl diphosphate from 1-deoxy-D-xylulose 5-phosphate: step 2/6. It participates in isoprenoid biosynthesis; isopentenyl diphosphate biosynthesis via DXP pathway; isopentenyl diphosphate from 1-deoxy-D-xylulose 5-phosphate: step 4/6. Its function is as follows. Bifunctional enzyme that catalyzes the formation of 4-diphosphocytidyl-2-C-methyl-D-erythritol from CTP and 2-C-methyl-D-erythritol 4-phosphate (MEP) (IspD), and catalyzes the conversion of 4-diphosphocytidyl-2-C-methyl-D-erythritol 2-phosphate (CDP-ME2P) to 2-C-methyl-D-erythritol 2,4-cyclodiphosphate (ME-CPP) with a corresponding release of cytidine 5-monophosphate (CMP) (IspF). This chain is Bifunctional enzyme IspD/IspF, found in Albidiferax ferrireducens (strain ATCC BAA-621 / DSM 15236 / T118) (Rhodoferax ferrireducens).